Here is a 435-residue protein sequence, read N- to C-terminus: GTPase Der (435 aa).

EngA-type G domains are found at residues 4 to 167 and 175 to 350; these read KIVA…SKND and TKIA…QSLS. Residues 10–17, 57–61, 119–122, 181–188, 228–232, and 293–296 contribute to the GTP site; these read GKPNVGKS, DTGGI, NKYD, DTAGI, and NKWD. Residues 351–435 enclose the KH-like domain; that stretch reads VKVKTYVLNE…PINLIFRERK (85 aa).

This sequence belongs to the TRAFAC class TrmE-Era-EngA-EngB-Septin-like GTPase superfamily. EngA (Der) GTPase family. In terms of assembly, associates with the 50S ribosomal subunit.

Its function is as follows. GTPase that plays an essential role in the late steps of ribosome biogenesis. The polypeptide is GTPase Der (Mycoplasma capricolum subsp. capricolum (strain California kid / ATCC 27343 / NCTC 10154)).